The primary structure comprises 456 residues: Bifunctional protein GlmU (456 aa).

Residues 1-229 (MLNNAMSVVI…LSEVEGVNNR (229 aa)) are pyrophosphorylase. UDP-N-acetyl-alpha-D-glucosamine contacts are provided by residues 11–14 (LAAG), Lys25, Gln76, 81–82 (GT), 103–105 (YGD), Gly140, Glu154, Asn169, and Asn227. Asp105 contacts Mg(2+). Asn227 contributes to the Mg(2+) binding site. Residues 230–250 (LQLSRLERVYQFEQAEKLLLA) are linker. The segment at 251–456 (GVMLRDPARF…EGWRRPVKKK (206 aa)) is N-acetyltransferase. UDP-N-acetyl-alpha-D-glucosamine is bound by residues Arg333 and Lys351. Residue His363 is the Proton acceptor of the active site. UDP-N-acetyl-alpha-D-glucosamine is bound by residues Tyr366 and Asn377. Residues Ala380, 386–387 (NY), Ser405, Ala423, and Arg440 each bind acetyl-CoA.

This sequence in the N-terminal section; belongs to the N-acetylglucosamine-1-phosphate uridyltransferase family. The protein in the C-terminal section; belongs to the transferase hexapeptide repeat family. Homotrimer. Mg(2+) is required as a cofactor.

Its subcellular location is the cytoplasm. The catalysed reaction is alpha-D-glucosamine 1-phosphate + acetyl-CoA = N-acetyl-alpha-D-glucosamine 1-phosphate + CoA + H(+). It carries out the reaction N-acetyl-alpha-D-glucosamine 1-phosphate + UTP + H(+) = UDP-N-acetyl-alpha-D-glucosamine + diphosphate. The protein operates within nucleotide-sugar biosynthesis; UDP-N-acetyl-alpha-D-glucosamine biosynthesis; N-acetyl-alpha-D-glucosamine 1-phosphate from alpha-D-glucosamine 6-phosphate (route II): step 2/2. It functions in the pathway nucleotide-sugar biosynthesis; UDP-N-acetyl-alpha-D-glucosamine biosynthesis; UDP-N-acetyl-alpha-D-glucosamine from N-acetyl-alpha-D-glucosamine 1-phosphate: step 1/1. Its pathway is bacterial outer membrane biogenesis; LPS lipid A biosynthesis. Catalyzes the last two sequential reactions in the de novo biosynthetic pathway for UDP-N-acetylglucosamine (UDP-GlcNAc). The C-terminal domain catalyzes the transfer of acetyl group from acetyl coenzyme A to glucosamine-1-phosphate (GlcN-1-P) to produce N-acetylglucosamine-1-phosphate (GlcNAc-1-P), which is converted into UDP-GlcNAc by the transfer of uridine 5-monophosphate (from uridine 5-triphosphate), a reaction catalyzed by the N-terminal domain. This Escherichia coli O7:K1 (strain IAI39 / ExPEC) protein is Bifunctional protein GlmU.